The sequence spans 216 residues: Small ribosomal subunit protein uS3 (216 aa).

Residues 20–91 (LKEFFEKALV…SVEIVVEKVH (72 aa)) enclose the KH type-2 domain.

The protein belongs to the universal ribosomal protein uS3 family.

The chain is Small ribosomal subunit protein uS3 (RPS3) from Encephalitozoon cuniculi (strain GB-M1) (Microsporidian parasite).